Here is a 723-residue protein sequence, read N- to C-terminus: Catalase-peroxidase (723 aa).

Residues 98 to 226 (WHSAGSYRVG…LAAVMMGLIY (129 aa)) constitute a cross-link (tryptophyl-tyrosyl-methioninium (Trp-Tyr) (with M-252)). Catalysis depends on histidine 99, which acts as the Proton acceptor. Residues 226–252 (YVNPEGVDGNPDPLKTAKDMRVTFARM) constitute a cross-link (tryptophyl-tyrosyl-methioninium (Tyr-Met) (with W-98)). Histidine 267 lines the heme b pocket.

The protein belongs to the peroxidase family. Peroxidase/catalase subfamily. As to quaternary structure, homodimer or homotetramer. Requires heme b as cofactor. Post-translationally, formation of the three residue Trp-Tyr-Met cross-link is important for the catalase, but not the peroxidase activity of the enzyme.

The catalysed reaction is H2O2 + AH2 = A + 2 H2O. It catalyses the reaction 2 H2O2 = O2 + 2 H2O. Functionally, bifunctional enzyme with both catalase and broad-spectrum peroxidase activity. The polypeptide is Catalase-peroxidase (Vibrio vulnificus (strain YJ016)).